The following is a 535-amino-acid chain: Serum response factor-binding protein 1 (535 aa).

2 coiled-coil regions span residues 5 to 27 (LNLN…LIIR) and 107 to 177 (LKQK…EKCK). 6 stretches are compositionally biased toward basic and acidic residues: residues 128–151 (AAEG…ETKK), 159–191 (KNTE…EKAL), 205–325 (AENK…ERPV), 361–376 (DKEK…ERFY), 406–432 (SDKD…EVQK), and 460–472 (TKRE…ERNK). 2 disordered regions span residues 128 to 435 (AAEG…KEIP) and 453 to 535 (TKPK…VFDD).

The protein resides in the cytoplasm. Its subcellular location is the perinuclear region. May be involved in regulating transcriptional activation of cardiac genes during the aging process. May play a role in biosynthesis and/or processing of SLC2A4 in adipose cells. The polypeptide is Serum response factor-binding protein 1 (Xenopus tropicalis (Western clawed frog)).